Reading from the N-terminus, the 240-residue chain is Aspartate/glutamate leucyltransferase (240 aa).

This sequence belongs to the R-transferase family. Bpt subfamily.

It localises to the cytoplasm. It catalyses the reaction N-terminal L-glutamyl-[protein] + L-leucyl-tRNA(Leu) = N-terminal L-leucyl-L-glutamyl-[protein] + tRNA(Leu) + H(+). The catalysed reaction is N-terminal L-aspartyl-[protein] + L-leucyl-tRNA(Leu) = N-terminal L-leucyl-L-aspartyl-[protein] + tRNA(Leu) + H(+). Its function is as follows. Functions in the N-end rule pathway of protein degradation where it conjugates Leu from its aminoacyl-tRNA to the N-termini of proteins containing an N-terminal aspartate or glutamate. The chain is Aspartate/glutamate leucyltransferase from Bordetella avium (strain 197N).